The primary structure comprises 280 residues: Ribosomal protein L11 methyltransferase (280 aa).

4 residues coordinate S-adenosyl-L-methionine: threonine 131, glycine 152, aspartate 174, and asparagine 217.

Belongs to the methyltransferase superfamily. PrmA family.

The protein resides in the cytoplasm. The catalysed reaction is L-lysyl-[protein] + 3 S-adenosyl-L-methionine = N(6),N(6),N(6)-trimethyl-L-lysyl-[protein] + 3 S-adenosyl-L-homocysteine + 3 H(+). Its function is as follows. Methylates ribosomal protein L11. This Bacteroides thetaiotaomicron (strain ATCC 29148 / DSM 2079 / JCM 5827 / CCUG 10774 / NCTC 10582 / VPI-5482 / E50) protein is Ribosomal protein L11 methyltransferase.